A 205-amino-acid chain; its full sequence is Recombination protein RecR (205 aa).

A C4-type zinc finger spans residues 58 to 75; the sequence is CSVCQNVTDRDADPCYIC. Residues 83-182 form the Toprim domain; that stretch reads SVICVVESPA…SVTKIARGIP (100 aa).

The protein belongs to the RecR family.

In terms of biological role, may play a role in DNA repair. It seems to be involved in an RecBC-independent recombinational process of DNA repair. It may act with RecF and RecO. The polypeptide is Recombination protein RecR (Chlorobium limicola (strain DSM 245 / NBRC 103803 / 6330)).